Reading from the N-terminus, the 149-residue chain is UPF0260 protein Pfl01_1392 (149 aa).

It belongs to the UPF0260 family.

The sequence is that of UPF0260 protein Pfl01_1392 from Pseudomonas fluorescens (strain Pf0-1).